The sequence spans 112 residues: UPF0060 membrane protein CMS0846 (112 aa).

A run of 4 helical transmembrane segments spans residues 6-26 (VILFALAAVAEIGGAWLIWQA), 32-52 (PFWWAGLGVMALGAYGFIATL), 61-81 (ILAAYGGVFVAGSLLWGTVVD), and 87-107 (RWDVIGAVVCLVGVAVIMAAP).

Belongs to the UPF0060 family.

It localises to the cell membrane. The sequence is that of UPF0060 membrane protein CMS0846 from Clavibacter sepedonicus (Clavibacter michiganensis subsp. sepedonicus).